We begin with the raw amino-acid sequence, 724 residues long: uncharacterized protein (724 aa).

Disordered stretches follow at residues 1–23 (MEDR…IPDN), 166–477 (PDGY…PPRD), 496–517 (EAHD…AHGP), and 532–691 (DHPI…PALS). 2 stretches are compositionally biased toward polar residues: residues 227–245 (VSQS…TVNQ) and 270–296 (STTL…TSDA). The span at 304–322 (TRDHDRYGNGRGPDTDRLE) shows a compositional bias: basic and acidic residues. Residues 403–413 (PSSSHSETPNM) show a composition bias toward polar residues. Basic and acidic residues-rich tracts occupy residues 550–560 (RNHEFTEDKRL) and 637–657 (LRHD…DLAA). Residues 682–691 (RLAAASPALS) show a composition bias toward low complexity.

This is an uncharacterized protein from Neurospora crassa (strain ATCC 24698 / 74-OR23-1A / CBS 708.71 / DSM 1257 / FGSC 987).